Here is a 155-residue protein sequence, read N- to C-terminus: UPF0178 protein ACIAD2644 (155 aa).

The segment at 120–155 (GAGVQTGGPPPISERDKREFSSALDQTILKQKRKTA) is disordered.

This sequence belongs to the UPF0178 family.

The protein is UPF0178 protein ACIAD2644 of Acinetobacter baylyi (strain ATCC 33305 / BD413 / ADP1).